A 332-amino-acid polypeptide reads, in one-letter code: tRNA dimethylallyltransferase (332 aa).

14–21 is an ATP binding site; sequence GPTASGKT. 16-21 contacts substrate; that stretch reads TASGKT. The tract at residues 39-42 is interaction with substrate tRNA; it reads DSMQ. Residues 312 to 332 are disordered; sequence NKRSSNHDCKRKHPRPSTREL. The span at 320–332 shows a compositional bias: basic residues; sequence CKRKHPRPSTREL.

It belongs to the IPP transferase family. Monomer. It depends on Mg(2+) as a cofactor.

The catalysed reaction is adenosine(37) in tRNA + dimethylallyl diphosphate = N(6)-dimethylallyladenosine(37) in tRNA + diphosphate. Functionally, catalyzes the transfer of a dimethylallyl group onto the adenine at position 37 in tRNAs that read codons beginning with uridine, leading to the formation of N6-(dimethylallyl)adenosine (i(6)A). This Staphylococcus epidermidis (strain ATCC 35984 / DSM 28319 / BCRC 17069 / CCUG 31568 / BM 3577 / RP62A) protein is tRNA dimethylallyltransferase.